The following is a 107-amino-acid chain: UPF0145 protein BH1111 (107 aa).

Belongs to the UPF0145 family.

The polypeptide is UPF0145 protein BH1111 (Halalkalibacterium halodurans (strain ATCC BAA-125 / DSM 18197 / FERM 7344 / JCM 9153 / C-125) (Bacillus halodurans)).